We begin with the raw amino-acid sequence, 271 residues long: Na(+), Li(+), K(+)/H(+) antiporter subunit B (271 aa).

A run of 7 helical transmembrane segments spans residues 2 to 22, 36 to 56, 94 to 114, 130 to 150, 152 to 172, 193 to 213, and 216 to 236; these read ILLT…AIIF, LPQV…FLVG, WVYL…PSLI, PFML…LGTW, IVMG…VIIQ, STIT…SIPG, and ALMD…ITVM. The segment at 252–271 is disordered; the sequence is TPHLSYSKAPPPSKGDNNAL.

Belongs to the UmpA/UmpB family. In terms of assembly, heterodimer composed of UmpA and UmpB.

It is found in the cell membrane. Its function is as follows. Part of a two-component antiporter that catalyzes the efflux of Na(+), Li(+) and K(+) in exchange for external protons. Shows a preference for Na(+), followed by K(+) and Li(+). This is Na(+), Li(+), K(+)/H(+) antiporter subunit B from Vreelandella zhaodongensis (Halomonas zhaodongensis).